The following is a 450-amino-acid chain: Signal recognition particle protein (450 aa).

GTP is bound by residues 106–113, 188–192, and 246–249; these read GLQGSGKT, DTAGR, and TKLD.

It belongs to the GTP-binding SRP family. SRP54 subfamily. In terms of assembly, part of the signal recognition particle protein translocation system, which is composed of SRP and FtsY.

It localises to the cytoplasm. It carries out the reaction GTP + H2O = GDP + phosphate + H(+). In terms of biological role, involved in targeting and insertion of nascent membrane proteins into the cytoplasmic membrane. Binds to the hydrophobic signal sequence of the ribosome-nascent chain (RNC) as it emerges from the ribosomes. The SRP-RNC complex is then targeted to the cytoplasmic membrane where it interacts with the SRP receptor FtsY. This chain is Signal recognition particle protein, found in Mycoplasma pneumoniae (strain ATCC 29342 / M129 / Subtype 1) (Mycoplasmoides pneumoniae).